The following is a 580-amino-acid chain: MYKFDQKLNHSAAHLLAMALTKFYPNLSLAIGPTIDEGFYYDFNLNDPNTSITPLDLLKIEKEMKKITTQALTFDYEQVTYEKAKELFKHNKYKLDIIEQNKNNSLSIYHSGKWFDLCKGPHVQNTKEIKAIKLLNIAGSYWRGDANNDQLIRIYGVAFSDQDQLDAYLKDLQERKERDHRKIGKDLNLFTFNNLAGQGLPIWLPNGTIIKNQVQKFINEVEFQFNFDTVITPILGSIDLYKTSGHWDHYKDNIFSPVQIDNEILVLRPMTCPHHTLVYSNELRSYRSLPIRLSEHSILHRYESSGGLTGFERVREMILEDCHVFCRFDQIEHEVINAFKMIQEAQEGLGIKTFEIHLSLNDPNDKEKYYDDPQMWEQSQNVLRKMLKDHNIPYKEMVGEAAFYGPKIDFQVKTVLNRIITVSTIQLDFLLPNRFNLTYINESNEQSVPVMIHIGIIGTYERLLAILLEQTKGILPLWLSPIQVVIIPVNENLHTDYVKELNIKLRKHLIRSNVDLRNERLSKKIREAQIQKIPYQIVIGDEEIKNNKMVTYRCYGSEKTTTVSITDFINMLENKIRLKK.

Residues 179–476 (DHRKIGKDLN…LLEQTKGILP (298 aa)) form a catalytic region. Zn(2+) is bound by residues C272, H323, and H453.

The protein belongs to the class-II aminoacyl-tRNA synthetase family. As to quaternary structure, homodimer. It depends on Zn(2+) as a cofactor.

It is found in the cytoplasm. It carries out the reaction tRNA(Thr) + L-threonine + ATP = L-threonyl-tRNA(Thr) + AMP + diphosphate + H(+). Catalyzes the attachment of threonine to tRNA(Thr) in a two-step reaction: L-threonine is first activated by ATP to form Thr-AMP and then transferred to the acceptor end of tRNA(Thr). Also edits incorrectly charged L-seryl-tRNA(Thr). The polypeptide is Threonine--tRNA ligase (Ureaplasma parvum serovar 3 (strain ATCC 27815 / 27 / NCTC 11736)).